A 244-amino-acid polypeptide reads, in one-letter code: tRNA (guanine-N(7)-)-methyltransferase (244 aa).

Polar residues predominate over residues 1–10 (MSDTPQSPAQ). A disordered region spans residues 1–20 (MSDTPQSPAQGSLAEHDEAR). S-adenosyl-L-methionine is bound by residues glutamate 74, glutamate 99, aspartate 126, and aspartate 149. The active site involves aspartate 149. Residues lysine 153, aspartate 185, and 222–225 (TKFE) each bind substrate.

This sequence belongs to the class I-like SAM-binding methyltransferase superfamily. TrmB family.

It catalyses the reaction guanosine(46) in tRNA + S-adenosyl-L-methionine = N(7)-methylguanosine(46) in tRNA + S-adenosyl-L-homocysteine. Its pathway is tRNA modification; N(7)-methylguanine-tRNA biosynthesis. In terms of biological role, catalyzes the formation of N(7)-methylguanine at position 46 (m7G46) in tRNA. In Pseudomonas aeruginosa (strain UCBPP-PA14), this protein is tRNA (guanine-N(7)-)-methyltransferase.